The primary structure comprises 212 residues: Probable plastid-lipid-associated protein 11, chloroplastic (212 aa).

The N-terminal 25 residues, methionine 1–serine 25, are a transit peptide targeting the chloroplast.

Belongs to the PAP/fibrillin family.

The protein localises to the plastid. It is found in the chloroplast thylakoid. The chain is Probable plastid-lipid-associated protein 11, chloroplastic (PAP11) from Arabidopsis thaliana (Mouse-ear cress).